A 389-amino-acid chain; its full sequence is Leucine aminopeptidase 1 (389 aa).

The signal sequence occupies residues 1–18 (MKSSVLLSLCTAALVAGA). Positions 19–89 (AHPLEPQVVL…INANRLIEKS (71 aa)) are excised as a propeptide. Residues Asn-99, Asn-156, and Asn-180 are each glycosylated (N-linked (GlcNAc...) asparagine). His-188, Asp-207, Glu-246, and Asp-273 together coordinate Zn(2+). Cys-322 and Cys-326 form a disulfide bridge. His-355 is a Zn(2+) binding site.

It belongs to the peptidase M28 family. M28E subfamily. As to quaternary structure, monomer. The cofactor is Zn(2+).

It is found in the secreted. Its function is as follows. Extracellular aminopeptidase that allows assimilation of proteinaceous substrates. In Phaeosphaeria nodorum (strain SN15 / ATCC MYA-4574 / FGSC 10173) (Glume blotch fungus), this protein is Leucine aminopeptidase 1 (LAP1).